The sequence spans 248 residues: Mannose-binding protein C (248 aa).

The first 20 residues, 1–20 (MSLFPSLPLLLLSMVAASYS), serve as a signal peptide directing secretion. The Collagen-like domain occupies 42-99 (GINGFPGKDGRDGTKGEKGEPGQGLRGLQGPPGKLGPPGNPGPSGSPGPKGQKGDPGK). Positions 43-113 (INGFPGKDGR…DSSLAASERK (71 aa)) are disordered. Pro-47 carries the 4-hydroxyproline modification. The segment covering 49–61 (KDGRDGTKGEKGE) has biased composition (basic and acidic residues). 4-hydroxyproline occurs at positions 73, 79, 82, and 88. A compositionally biased stretch (pro residues) spans 75-87 (KLGPPGNPGPSGS). A compositionally biased stretch (basic and acidic residues) spans 93–102 (QKGDPGKSPD). The stretch at 112–130 (RKALQTEMARIKKWLTFSL) forms a coiled coil. A C-type lectin domain is found at 134 to 245 (VGNKFFLTNG…CSTSHLAVCE (112 aa)). 2 cysteine pairs are disulfide-bonded: Cys-155–Cys-244 and Cys-222–Cys-236.

Oligomeric complex of 3 or more homotrimers. Interacts with MASP1 and MASP2. Interacts with MEP1A and MEP1B and may inhibit their catalytic activity. Post-translationally, hydroxylation on proline residues within the sequence motif, GXPG, is most likely to be 4-hydroxy as this fits the requirement for 4-hydroxylation in vertebrates.

It is found in the secreted. In terms of biological role, calcium-dependent lectin involved in innate immune defense. Binds mannose, fucose and N-acetylglucosamine on different microorganisms and activates the lectin complement pathway. Binds to late apoptotic cells, as well as to apoptotic blebs and to necrotic cells, but not to early apoptotic cells, facilitating their uptake by macrophages. This chain is Mannose-binding protein C (MBL2), found in Gorilla gorilla gorilla (Western lowland gorilla).